Reading from the N-terminus, the 124-residue chain is Small ribosomal subunit protein uS12 (124 aa).

Residue aspartate 89 is modified to 3-methylthioaspartic acid.

This sequence belongs to the universal ribosomal protein uS12 family. In terms of assembly, part of the 30S ribosomal subunit. Contacts proteins S8 and S17. May interact with IF1 in the 30S initiation complex.

Functionally, with S4 and S5 plays an important role in translational accuracy. Interacts with and stabilizes bases of the 16S rRNA that are involved in tRNA selection in the A site and with the mRNA backbone. Located at the interface of the 30S and 50S subunits, it traverses the body of the 30S subunit contacting proteins on the other side and probably holding the rRNA structure together. The combined cluster of proteins S8, S12 and S17 appears to hold together the shoulder and platform of the 30S subunit. This chain is Small ribosomal subunit protein uS12, found in Vibrio vulnificus (strain CMCP6).